We begin with the raw amino-acid sequence, 203 residues long: Recombination protein RecR (203 aa).

A C4-type zinc finger spans residues 57 to 73 (CQSCGTLKSNSLGCNNC). Residues 81 to 175 (NKICVVEDIA…KVTKLAQGLP (95 aa)) enclose the Toprim domain.

It belongs to the RecR family.

May play a role in DNA repair. It seems to be involved in an RecBC-independent recombinational process of DNA repair. It may act with RecF and RecO. The polypeptide is Recombination protein RecR (Pelagibacter ubique (strain HTCC1062)).